The chain runs to 223 residues: UPF0441 protein YgiB (223 aa).

The segment covering 178-195 has biased composition (low complexity); sequence TVPKTAMAPKPATTTTVT. The interval 178–223 is disordered; it reads TVPKTAMAPKPATTTTVTRGGFGESVAKQSTLQRSATGTSSRSMGG. Residues 204–223 show a composition bias toward polar residues; it reads AKQSTLQRSATGTSSRSMGG.

It belongs to the UPF0441 family.

The polypeptide is UPF0441 protein YgiB (Escherichia coli (strain ATCC 8739 / DSM 1576 / NBRC 3972 / NCIMB 8545 / WDCM 00012 / Crooks)).